Reading from the N-terminus, the 743-residue chain is Myb-related protein B (743 aa).

The tract at residues 1–29 (MSRRSRGDDLEDLQYQDTDSDVPEPKENR) is disordered. The span at 9–22 (DLEDLQYQDTDSDV) shows a compositional bias: acidic residues. HTH myb-type domains follow at residues 26–77 (KENR…LRVL), 78–133 (HPDL…NPEV), and 134–184 (KKSS…KRKV). 3 consecutive DNA-binding regions (H-T-H motif) follow at residues 54–77 (WKTIASNLNNRTEQQCQHRWLRVL), 106–129 (WTLIAKQLRGRMGKQCRERWHNHL), and 157–180 (WAEIAKLLPGRTDNAVKNHWNSTI). Disordered regions lie at residues 221–262 (VERS…SESA) and 381–406 (VTENGGSITTSVTEANSMTPKSTPVK).

As to quaternary structure, component of the DREAM complex.

It localises to the nucleus. The protein is Myb-related protein B (mybl2) of Xenopus laevis (African clawed frog).